The sequence spans 101 residues: Small ribosomal subunit protein uS14 (101 aa).

Belongs to the universal ribosomal protein uS14 family. Part of the 30S ribosomal subunit. Contacts proteins S3 and S10.

Functionally, binds 16S rRNA, required for the assembly of 30S particles and may also be responsible for determining the conformation of the 16S rRNA at the A site. The polypeptide is Small ribosomal subunit protein uS14 (Pseudomonas putida (strain ATCC 47054 / DSM 6125 / CFBP 8728 / NCIMB 11950 / KT2440)).